Consider the following 281-residue polypeptide: MSTLTVDNVTKTYGDVVALDSVSFEIENEFVVLLGESGAGKSTMLRCVNGLTHPTEGEIRLNGDPINGSRSDIGMIFQQHNLVDGVSAYMNALTGSLDRTSTVSSLLQQQNKETKERALEALQTVGLLEESHQRTSQMSGGQQQRVGIARALVQDPALLLADEPVASLDPSSAESVMDYLKKAASVHEVTALVSLHQVNIAAYFGERFIGLRDGEILFDVSPEKLTPGLVDDLYGNVETVGLATDNSDNSTVDTSDGTRYDTETGSDGTDEVDVIGRQVES.

Residues 4 to 238 (LTVDNVTKTY…LVDDLYGNVE (235 aa)) enclose the ABC transporter domain. 35–42 (GESGAGKS) serves as a coordination point for ATP. A disordered region spans residues 243 to 281 (ATDNSDNSTVDTSDGTRYDTETGSDGTDEVDVIGRQVES). The span at 244–255 (TDNSDNSTVDTS) shows a compositional bias: low complexity.

Belongs to the ABC transporter superfamily. Phosphonates importer (TC 3.A.1.9.1) family. As to quaternary structure, the complex is composed of two ATP-binding proteins (PhnC), two transmembrane proteins (PhnE) and a solute-binding protein (PhnD).

It localises to the cell membrane. It catalyses the reaction phosphonate(out) + ATP + H2O = phosphonate(in) + ADP + phosphate + H(+). In terms of biological role, part of the ABC transporter complex PhnCDE involved in phosphonates import. Responsible for energy coupling to the transport system. This chain is Phosphonates import ATP-binding protein PhnC 2, found in Haloquadratum walsbyi (strain DSM 16790 / HBSQ001).